Reading from the N-terminus, the 459-residue chain is Alpha-N-acetylgalactosaminidase (459 aa).

A signal peptide (tat-type signal) is located at residues 1 to 31; it reads MHNIHRRHFLKAAGAVTAGLVTANIALNANA. Residues 64-65, Asp86, 135-138, 155-156, and Asn184 contribute to the NAD(+) site; these read ER, WEWH, and EV. Substrate contacts are provided by residues Tyr213, Arg232, 244-247, and Tyr326; that span reads YPTH. Residue Tyr244 coordinates NAD(+).

It belongs to the Gfo/Idh/MocA family. Glycosyl hydrolase 109 subfamily. Requires NAD(+) as cofactor. Predicted to be exported by the Tat system. The position of the signal peptide cleavage has not been experimentally proven.

It carries out the reaction Cleavage of non-reducing alpha-(1-&gt;3)-N-acetylgalactosamine residues from human blood group A and AB mucin glycoproteins, Forssman hapten and blood group A lacto series glycolipids.. In terms of biological role, glycosidase that has specific alpha-N-acetylgalactosaminidase activity. The chain is Alpha-N-acetylgalactosaminidase (nagA) from Shewanella oneidensis (strain ATCC 700550 / JCM 31522 / CIP 106686 / LMG 19005 / NCIMB 14063 / MR-1).